The chain runs to 346 residues: Anthranilate phosphoribosyltransferase (346 aa).

Residues Gly81, 84–85, 91–94, 109–117, and Ser121 each bind 5-phospho-alpha-D-ribose 1-diphosphate; these read GD, NVST, and KHGNRSVSS. An anthranilate-binding site is contributed by Gly81. Ser93 serves as a coordination point for Mg(2+). Asn112 contacts anthranilate. Position 167 (Arg167) interacts with anthranilate. Residues Asp226 and Glu227 each contribute to the Mg(2+) site.

It belongs to the anthranilate phosphoribosyltransferase family. As to quaternary structure, homodimer. Mg(2+) is required as a cofactor.

The catalysed reaction is N-(5-phospho-beta-D-ribosyl)anthranilate + diphosphate = 5-phospho-alpha-D-ribose 1-diphosphate + anthranilate. It functions in the pathway amino-acid biosynthesis; L-tryptophan biosynthesis; L-tryptophan from chorismate: step 2/5. Functionally, catalyzes the transfer of the phosphoribosyl group of 5-phosphorylribose-1-pyrophosphate (PRPP) to anthranilate to yield N-(5'-phosphoribosyl)-anthranilate (PRA). This is Anthranilate phosphoribosyltransferase from Hahella chejuensis (strain KCTC 2396).